An 845-amino-acid polypeptide reads, in one-letter code: Translation initiation factor IF-2 (845 aa).

2 stretches are compositionally biased toward basic and acidic residues: residues glutamate 139–alanine 198 and phenylalanine 206–histidine 228. The interval glutamate 139–histidine 253 is disordered. The tr-type G domain occupies serine 345–glutamate 512. A G1 region spans residues glycine 354 to threonine 361. GTP is bound at residue glycine 354–threonine 361. A G2 region spans residues glycine 379 to histidine 383. Residues aspartate 400–glycine 403 are G3. Residues aspartate 400 to histidine 404 and asparagine 454 to aspartate 457 each bind GTP. Positions asparagine 454–aspartate 457 are G4. A G5 region spans residues serine 490–lysine 492.

Belongs to the TRAFAC class translation factor GTPase superfamily. Classic translation factor GTPase family. IF-2 subfamily.

The protein resides in the cytoplasm. Its function is as follows. One of the essential components for the initiation of protein synthesis. Protects formylmethionyl-tRNA from spontaneous hydrolysis and promotes its binding to the 30S ribosomal subunits. Also involved in the hydrolysis of GTP during the formation of the 70S ribosomal complex. The sequence is that of Translation initiation factor IF-2 from Nitrosococcus oceani (strain ATCC 19707 / BCRC 17464 / JCM 30415 / NCIMB 11848 / C-107).